A 155-amino-acid chain; its full sequence is Probable ribosome biogenesis protein RLP24 (155 aa).

The protein belongs to the eukaryotic ribosomal protein eL24 family.

This chain is Probable ribosome biogenesis protein RLP24 (RPL24), found in Encephalitozoon cuniculi (strain GB-M1) (Microsporidian parasite).